We begin with the raw amino-acid sequence, 366 residues long: Ribosomal RNA large subunit methyltransferase M (366 aa).

S-adenosyl-L-methionine contacts are provided by residues S188, 221 to 224 (CPGG), D240, D260, and D277. The active-site Proton acceptor is K306.

The protein belongs to the class I-like SAM-binding methyltransferase superfamily. RNA methyltransferase RlmE family. RlmM subfamily. In terms of assembly, monomer.

The protein localises to the cytoplasm. It catalyses the reaction cytidine(2498) in 23S rRNA + S-adenosyl-L-methionine = 2'-O-methylcytidine(2498) in 23S rRNA + S-adenosyl-L-homocysteine + H(+). Its function is as follows. Catalyzes the 2'-O-methylation at nucleotide C2498 in 23S rRNA. The sequence is that of Ribosomal RNA large subunit methyltransferase M from Shigella boydii serotype 4 (strain Sb227).